Reading from the N-terminus, the 356-residue chain is Histidinol-phosphate aminotransferase (356 aa).

K214 is modified (N6-(pyridoxal phosphate)lysine).

Belongs to the class-II pyridoxal-phosphate-dependent aminotransferase family. Histidinol-phosphate aminotransferase subfamily. As to quaternary structure, homodimer. Requires pyridoxal 5'-phosphate as cofactor.

It catalyses the reaction L-histidinol phosphate + 2-oxoglutarate = 3-(imidazol-4-yl)-2-oxopropyl phosphate + L-glutamate. The protein operates within amino-acid biosynthesis; L-histidine biosynthesis; L-histidine from 5-phospho-alpha-D-ribose 1-diphosphate: step 7/9. This chain is Histidinol-phosphate aminotransferase, found in Escherichia coli O81 (strain ED1a).